Reading from the N-terminus, the 467-residue chain is MSFIHDDFLLSSKTARRFYHTFAEDQPILDYHCHLPPQDVAANRQFKDLFEIWLEGDHYKWRAMRANGVPESHCTGNAPAYEKFMAWAKTVPATLRNPLYHWTHLELKRYFGIDELLNEQSAARVWEQANAVLATPELTAHRILEKFHVKAVCTTDDPTDDLAAHQAIAASGLATKVFPTFRPDKALHVHAPELFNPWVDRLQVAADTHISTMAEFLDAIKKRHDFFHAMGGRLSDHGINHAFSDFPSEHEAARIFGRARCGHAATSEEHGKFAAYMMLVFGRLDAEKGWTKQLHLGARRNNSTRRFRELGADTGWDSIGDWPQADALGTYLDRLDLENALPKTVIYNLNPADNYVIATMIGNFQDGVTAGKVQFGSGWWFLDQKEAMQWQMNALSNCGMFSKFLGMLTDSRSFMSYPRHEYFRRVLCDLFGRDVENGELPDNDELIGPVIRDICYGNAQRFLGLNV.

It belongs to the metallo-dependent hydrolases superfamily. Uronate isomerase family.

The enzyme catalyses D-glucuronate = D-fructuronate. It catalyses the reaction aldehydo-D-galacturonate = keto-D-tagaturonate. The protein operates within carbohydrate metabolism; pentose and glucuronate interconversion. The polypeptide is Uronate isomerase (Solibacter usitatus (strain Ellin6076)).